Reading from the N-terminus, the 415-residue chain is F-box/kelch-repeat protein At2g29600 (415 aa).

The interval 1-58 (MASISETSDDGSNGGDPNQKPEEPHKNPQEGKEEENQNEKPKEDDHQEEEVENVPQIP) is disordered. Residues 19 to 45 (QKPEEPHKNPQEGKEEENQNEKPKEDD) are compositionally biased toward basic and acidic residues. An F-box domain is found at 56–103 (QIPPQMPLELIVSTIATLRRCHYPTLSLLSDSFRQVISSVDLFQTRSL). Kelch repeat units lie at residues 161–208 (KIYV…VIDG), 210–254 (IYVV…FNVH), 260–309 (KIYI…AVVP), and 311–355 (HLHV…KLMI).

The chain is F-box/kelch-repeat protein At2g29600 from Arabidopsis thaliana (Mouse-ear cress).